We begin with the raw amino-acid sequence, 297 residues long: Phosphatidylserine decarboxylase proenzyme (297 aa).

Active-site charge relay system; for autoendoproteolytic cleavage activity residues include Asp-100, His-157, and Ser-263. Ser-263 functions as the Schiff-base intermediate with substrate; via pyruvic acid; for decarboxylase activity in the catalytic mechanism. Position 263 is a pyruvic acid (Ser); by autocatalysis (Ser-263).

Belongs to the phosphatidylserine decarboxylase family. PSD-B subfamily. Prokaryotic type I sub-subfamily. Heterodimer of a large membrane-associated beta subunit and a small pyruvoyl-containing alpha subunit. Pyruvate is required as a cofactor. In terms of processing, is synthesized initially as an inactive proenzyme. Formation of the active enzyme involves a self-maturation process in which the active site pyruvoyl group is generated from an internal serine residue via an autocatalytic post-translational modification. Two non-identical subunits are generated from the proenzyme in this reaction, and the pyruvate is formed at the N-terminus of the alpha chain, which is derived from the carboxyl end of the proenzyme. The autoendoproteolytic cleavage occurs by a canonical serine protease mechanism, in which the side chain hydroxyl group of the serine supplies its oxygen atom to form the C-terminus of the beta chain, while the remainder of the serine residue undergoes an oxidative deamination to produce ammonia and the pyruvoyl prosthetic group on the alpha chain. During this reaction, the Ser that is part of the protease active site of the proenzyme becomes the pyruvoyl prosthetic group, which constitutes an essential element of the active site of the mature decarboxylase.

Its subcellular location is the cell membrane. It carries out the reaction a 1,2-diacyl-sn-glycero-3-phospho-L-serine + H(+) = a 1,2-diacyl-sn-glycero-3-phosphoethanolamine + CO2. Its pathway is phospholipid metabolism; phosphatidylethanolamine biosynthesis; phosphatidylethanolamine from CDP-diacylglycerol: step 2/2. Its function is as follows. Catalyzes the formation of phosphatidylethanolamine (PtdEtn) from phosphatidylserine (PtdSer). The polypeptide is Phosphatidylserine decarboxylase proenzyme (Actinobacillus pleuropneumoniae serotype 5b (strain L20)).